A 338-amino-acid polypeptide reads, in one-letter code: ATP synthase subunit a (338 aa).

A helical transmembrane segment spans residues 15–35; it reads IAVLVMPLLLGFGAPIYAAAE. A disordered region spans residues 45–66; it reads AAAVHTDEAHGEAGEHAEGGHG. Residues 49–65 are compositionally biased toward basic and acidic residues; that stretch reads HTDEAHGEAGEHAEGGH. 7 consecutive transmembrane segments (helical) span residues 109–129, 174–194, 199–219, 238–258, 262–282, 287–307, and 308–328; these read HVVFMWLAALILLLVFGYVGN, LLTVFVFILVLNLLGLIPYGA, NINVTLTLSVFTFFITQVSAI, ALWIIMIPIEVIGLFTKPFAL, LFANMTAGHIIILSLIFISFI, IVAIFVSVPFSIFIYLLEIFV, and SFLQAFIFTMLSALFIGLGSA.

Belongs to the ATPase A chain family. As to quaternary structure, F-type ATPases have 2 components, CF(1) - the catalytic core - and CF(0) - the membrane proton channel. CF(1) has five subunits: alpha(3), beta(3), gamma(1), delta(1), epsilon(1). CF(0) has four main subunits: a, b, b' and c.

The protein localises to the cell inner membrane. Functionally, key component of the proton channel; it plays a direct role in the translocation of protons across the membrane. The sequence is that of ATP synthase subunit a from Chlorobium phaeobacteroides (strain BS1).